Here is a 144-residue protein sequence, read N- to C-terminus: Putative pre-16S rRNA nuclease (144 aa).

The protein belongs to the YqgF nuclease family.

The protein resides in the cytoplasm. In terms of biological role, could be a nuclease involved in processing of the 5'-end of pre-16S rRNA. This is Putative pre-16S rRNA nuclease from Lactiplantibacillus plantarum (strain ATCC BAA-793 / NCIMB 8826 / WCFS1) (Lactobacillus plantarum).